A 272-amino-acid chain; its full sequence is Heat stress transcription factor A-7a (272 aa).

The disordered stretch occupies residues 1 to 26 (MMNPFLPEGCDPPPPPQPMEGLHENA). Residues 27–121 (PPPFLTKTFE…LLKNIKRRNP (95 aa)) mediate DNA binding. Residues 132–186 (ACNELRREKQVLMMEIVSLRQQQQTTKSYIKAMEQRIEGTERKQRQMMSFLARAM) form a hydrophobic repeat HR-A/B region. The short motif at 201 to 216 (KKIKELEDNESAKRKR) is the Bipartite nuclear localization signal element. Residues 203 to 212 (IKELEDNESA) show a composition bias toward basic and acidic residues. Residues 203 to 223 (IKELEDNESAKRKRGSSSMSE) are disordered. The short motif at 256 to 265 (DGFWEELLSD) is the AHA element.

It belongs to the HSF family. Class A subfamily. Homotrimer. In terms of processing, exhibits temperature-dependent phosphorylation.

It is found in the nucleus. Its function is as follows. Transcriptional activator that specifically binds DNA sequence 5'-AGAAnnTTCT-3' known as heat shock promoter elements (HSE). This is Heat stress transcription factor A-7a (HSFA7A) from Arabidopsis thaliana (Mouse-ear cress).